Reading from the N-terminus, the 145-residue chain is Small ribosomal subunit protein uS12A (145 aa).

Pro64 is modified (hydroxyproline).

The protein belongs to the universal ribosomal protein uS12 family.

This Naumovozyma castellii (Yeast) protein is Small ribosomal subunit protein uS12A (RPS23A).